A 27-amino-acid polypeptide reads, in one-letter code: Delta-actitoxin-Avd2a (27 aa).

3 cysteine pairs are disulfide-bonded: C3/C17, C4/C11, and C6/C22.

This sequence belongs to the sea anemone short toxin (type III) family.

The protein localises to the secreted. It is found in the nematocyst. Specific arthropod (crab and insect) toxin that inhibits inactivation of voltage-gated sodium channels. It competes well with the site-3 toxin LqhalphaIT (from the scorpion L.quinquestriatus (AC P17728)) on binding to cockroach neuronal membranes (Ki=21.4 nM), and inhibits the inactivation of D.melanogaster channel (DmNav1), but not that of mammalian Navs expressed in Xenopus oocytes. Its activity is synergically enhanced by ligands of receptor site-4 (Bj-xtrIT (AC P56637)). Its ability to inhibit the channel mutant DmNav1[D1701R] only decreases 5-fold, whereas the inhibition activity is completely lost by LqhalphaIT and Av2 when tested on DmNav1[D1701R]. The polypeptide is Delta-actitoxin-Avd2a (Anemonia sulcata (Mediterranean snakelocks sea anemone)).